Here is a 299-residue protein sequence, read N- to C-terminus: Lymphocyte antigen 6 complex locus protein G6f (299 aa).

Residues 1 to 19 (MAVLFLLLLFLCGLPQAET) form the signal peptide. An Ig-like V-type domain is found at 20–124 (DSIQAIYVVL…YRYQNWRVYD (105 aa)). Topologically, residues 20–237 (DSIQAIYVVL…APSADWDVAW (218 aa)) are extracellular. Cys37 and Cys108 are disulfide-bonded. N-linked (GlcNAc...) asparagine glycosylation occurs at Asn90. Residues 238-258 (ILTLLLTVGQGFTIVVLGVML) form a helical membrane-spanning segment. The Cytoplasmic segment spans residues 259 to 299 (WRQRAQGAQHRNASFPQFKPEIQVYENIHLAHLSPPAPKTR). Phosphotyrosine is present on Tyr283.

In terms of assembly, homodimer; disulfide-linked. Interacts with GRB2 and GRB7 in a phosphorylation-dependent manner. In terms of processing, N-glycosylated.

Its subcellular location is the cell membrane. Functionally, may play a role in the downstream signal transduction pathways involving GRB2 and GRB7. The polypeptide is Lymphocyte antigen 6 complex locus protein G6f (LY6G6F) (Bos taurus (Bovine)).